The following is a 171-amino-acid chain: Moubatin (171 aa).

An N-terminal signal peptide occupies residues 1 to 15; the sequence is MMLVLTTLIFSFSAS. Disulfide bonds link C23-C144, C55-C166, and C118-C145.

This sequence belongs to the calycin superfamily. Lipocalin family. The N-terminus is blocked. In terms of tissue distribution, expressed in salivary glands.

Its subcellular location is the secreted. Functionally, tick salivary platelet aggregation inhibitor that plays an important part in the anti-hemostatic strategy of ticks. Acts by scavenging thromboxane A2 (TXA2), a potent inducer of platelet aggregation and blood vessel constriction. As a consequence, is a specific inhibitor of collagen-induced platelet aggregation. In addition, it also acts as a potent inhibitor of TXA2-mediated vasoconstriction. Has also been found to bind leukotriene B4 (LTB4) (which also derives from arachidonic acid, as TXA2) with affinities in the nanomolar range. It does not interact with complement protein C5. The polypeptide is Moubatin (Ornithodoros moubata (Soft tick)).